The sequence spans 266 residues: UPF0294 protein YafD (266 aa).

Belongs to the UPF0294 family.

It localises to the cytoplasm. This is UPF0294 protein YafD from Shigella dysenteriae serotype 1 (strain Sd197).